Consider the following 286-residue polypeptide: ATP synthase gamma chain (286 aa).

This sequence belongs to the ATPase gamma chain family. In terms of assembly, F-type ATPases have 2 components, CF(1) - the catalytic core - and CF(0) - the membrane proton channel. CF(1) has five subunits: alpha(3), beta(3), gamma(1), delta(1), epsilon(1). CF(0) has three main subunits: a, b and c.

It is found in the cell inner membrane. Its function is as follows. Produces ATP from ADP in the presence of a proton gradient across the membrane. The gamma chain is believed to be important in regulating ATPase activity and the flow of protons through the CF(0) complex. The polypeptide is ATP synthase gamma chain (Shewanella frigidimarina (strain NCIMB 400)).